Reading from the N-terminus, the 151-residue chain is Small ribosomal subunit protein uS15 (151 aa).

This sequence belongs to the universal ribosomal protein uS15 family.

In Choristoneura parallela (Spotted fireworm moth), this protein is Small ribosomal subunit protein uS15 (RpS13).